We begin with the raw amino-acid sequence, 393 residues long: Putative mitogen-activated protein kinase kinase kinase 7-like (393 aa).

Positions 11–266 (KLSEKFLGAG…PSMKEIEKFL (256 aa)) constitute a Protein kinase domain. ATP is bound by residues 17–25 (LGAGSGGAV) and Lys-38. Asp-133 (proton acceptor) is an active-site residue. The tract at residues 339–379 (AAADGDREVRRAEKDTERETSRAAHNGERETRRAGQDVGRE) is disordered.

It belongs to the protein kinase superfamily. STE Ser/Thr protein kinase family. MAP kinase kinase kinase subfamily. The cofactor is Mg(2+).

The catalysed reaction is L-seryl-[protein] + ATP = O-phospho-L-seryl-[protein] + ADP + H(+). The enzyme catalyses L-threonyl-[protein] + ATP = O-phospho-L-threonyl-[protein] + ADP + H(+). The chain is Putative mitogen-activated protein kinase kinase kinase 7-like (Takl1) from Drosophila melanogaster (Fruit fly).